The following is a 629-amino-acid chain: Putrebactin synthase (629 aa).

This sequence belongs to the IucA/IucC family. In terms of assembly, homodimer.

The enzyme catalyses 2 N-(3-carboxypropanoyl)-N-hydroxyputrescine + 2 ATP = putrebactin + 2 AMP + 2 diphosphate + 2 H(+). It carries out the reaction 2 N-(3-carboxypropanoyl)-N-hydroxyputrescine + ATP = pre-putrebactin + AMP + diphosphate + H(+). The catalysed reaction is pre-putrebactin + ATP = putrebactin + AMP + diphosphate + H(+). The protein operates within siderophore biosynthesis. Its activity is regulated as follows. Requires Mg(2+) for activity. Functionally, ligase involved in the biosynthesis of the siderophore putrebactin. Catalyzes the ATP-dependent head-to-tail dimerization of N-hydroxy-N-succinyl-putrescine (HSP) to give pre-putrebactin and subsequent macrocyclization of pre-putrebactin to give putrebactin. This chain is Putrebactin synthase, found in Shewanella sp. (strain MR-4).